A 299-amino-acid polypeptide reads, in one-letter code: METQYPKLIEPSKTRIGWIGIGIMGSAMVSHILAAGYSVTVYARDLRKTKDLQTKGGRTANSPKELGEMSDVVFTIVGNSNDVRSLLLGDDGVLSGLKPGGVTVDMTSSKPGLAREIYAEARRRDCWAVDAPVSGGDAGAREGKLTIFAGGDSEIVEWLAPVMKTMGIVRFMGGAGSGQSCKIGNQICVGSNMIGLAEGIVFAEKAGLDPVKWLEAVKDGAAGSAVMRLFGEMMAVRDYKATGFAEYMVKDLGMAAEAAMAMPGTALNKQLFTVMVANGDGKLGFQGVVDVIRRLNGLS.

Residues 14–43 (TRIG…TVYA) and serine 108 each bind NAD(+). The active site involves lysine 182. Lysine 250 is a binding site for NAD(+).

The protein belongs to the HIBADH-related family. 3-hydroxyisobutyrate dehydrogenase subfamily.

Its subcellular location is the mitochondrion. The enzyme catalyses 3-hydroxy-2-methylpropanoate + NAD(+) = 2-methyl-3-oxopropanoate + NADH + H(+). The protein operates within amino-acid degradation; L-valine degradation. This Arabidopsis thaliana (Mouse-ear cress) protein is Probable 3-hydroxyisobutyrate dehydrogenase-like 2, mitochondrial.